A 1484-amino-acid polypeptide reads, in one-letter code: Ral GTPase-activating protein subunit beta (1484 aa).

Disordered regions lie at residues 355 to 437 (PRSD…APRR) and 699 to 728 (ENNL…PDSE). Ser359 carries the post-translational modification Phosphoserine. Phosphothreonine occurs at positions 363 and 379. Composition is skewed to polar residues over residues 369-381 (SMPQ…TTPP), 392-428 (NKAT…TSSE), and 701-725 (NLKS…PTTP). Phosphoserine is present on residues Ser421 and Ser710. Thr724 carries the post-translational modification Phosphothreonine. Residues 1138–1382 (IGYLDLLPCR…TTLEKEVPVI (245 aa)) form the Rap-GAP domain. A Phosphoserine modification is found at Ser1275. The disordered stretch occupies residues 1297 to 1325 (PNHTDSLNSSQRLSPSSRMKKLPQGRPVP). Residues 1302-1313 (SLNSSQRLSPSS) are compositionally biased toward low complexity.

In terms of assembly, component of the heterodimeric RalGAP1 complex with RALGAPA1 and of the heterodimeric RalGAP2 complex with RALGAPA2. Heterodimerization is required for activity. As to expression, abundantly expressed in testis, pancreas, lung, thymus, brown fat, and white fat. Expressed at lower levels in the brain.

In terms of biological role, non-catalytic subunit of the heterodimeric RalGAP1 and RalGAP2 complexes which act as GTPase activators for the Ras-like small GTPases RALA and RALB. The chain is Ral GTPase-activating protein subunit beta (Ralgapb) from Mus musculus (Mouse).